Here is a 196-residue protein sequence, read N- to C-terminus: dTDP-4-dehydro-6-deoxyglucose 3-epimerase (196 aa).

Substrate is bound by residues Arg21, Glu26, 45–47 (QVN), and Arg57. His60 (proton acceptor) is an active-site residue. Substrate is bound by residues Lys70 and Arg117. Tyr130 serves as the catalytic Proton donor. Substrate is bound by residues Glu141 and Arg166.

This sequence belongs to the dTDP-4-dehydrorhamnose 3,5-epimerase family. In terms of assembly, homodimer.

The enzyme catalyses dTDP-4-dehydro-6-deoxy-alpha-D-glucose = dTDP-4-dehydro-6-deoxy-alpha-D-allose. It functions in the pathway antibiotic biosynthesis. Involved in the biosynthesis of dTDP-6-deoxy-D-allose, an intermediate in the biosynthesis of mycinose, which is one of the two unusual sugars attached to the 16-membered macrolactone ring of the aglycone antibiotic chalcomycin. Catalyzes the conversion of dTDP-4-oxo-6-deoxyglucose to dTDP-4-oxo-6-deoxyallose, via a C-3 epimerization. In Streptomyces bikiniensis, this protein is dTDP-4-dehydro-6-deoxyglucose 3-epimerase.